Consider the following 586-residue polypeptide: Arginine--tRNA ligase (586 aa).

The 'HIGH' region motif lies at 133–143 (ANPTGPLNIVS).

It belongs to the class-I aminoacyl-tRNA synthetase family. Monomer.

It localises to the cytoplasm. It catalyses the reaction tRNA(Arg) + L-arginine + ATP = L-arginyl-tRNA(Arg) + AMP + diphosphate. The protein is Arginine--tRNA ligase of Leptospira borgpetersenii serovar Hardjo-bovis (strain JB197).